A 544-amino-acid chain; its full sequence is NADH-quinone oxidoreductase subunit C/D (544 aa).

The NADH dehydrogenase I subunit C stretch occupies residues 1-138 (MLNCDMLIDS…KGQICTETED (138 aa)). The segment at 161–544 (MLLNVGPSHP…MNFIAGEFDR (384 aa)) is NADH dehydrogenase I subunit D.

The protein in the N-terminal section; belongs to the complex I 30 kDa subunit family. It in the C-terminal section; belongs to the complex I 49 kDa subunit family. As to quaternary structure, NDH-1 is composed of 13 different subunits. Subunits NuoB, CD, E, F, and G constitute the peripheral sector of the complex.

It localises to the cell inner membrane. It carries out the reaction a quinone + NADH + 5 H(+)(in) = a quinol + NAD(+) + 4 H(+)(out). Its function is as follows. NDH-1 shuttles electrons from NADH, via FMN and iron-sulfur (Fe-S) centers, to quinones in the respiratory chain. The immediate electron acceptor for the enzyme in this species is believed to be ubiquinone. Couples the redox reaction to proton translocation (for every two electrons transferred, four hydrogen ions are translocated across the cytoplasmic membrane), and thus conserves the redox energy in a proton gradient. This chain is NADH-quinone oxidoreductase subunit C/D, found in Aliarcobacter butzleri (strain RM4018) (Arcobacter butzleri).